The primary structure comprises 211 residues: Protein-L-isoaspartate O-methyltransferase (211 aa).

Residue Ser-60 is part of the active site.

The protein belongs to the methyltransferase superfamily. L-isoaspartyl/D-aspartyl protein methyltransferase family.

The protein localises to the cytoplasm. The enzyme catalyses [protein]-L-isoaspartate + S-adenosyl-L-methionine = [protein]-L-isoaspartate alpha-methyl ester + S-adenosyl-L-homocysteine. Catalyzes the methyl esterification of L-isoaspartyl residues in peptides and proteins that result from spontaneous decomposition of normal L-aspartyl and L-asparaginyl residues. It plays a role in the repair and/or degradation of damaged proteins. This Pseudomonas savastanoi pv. phaseolicola (strain 1448A / Race 6) (Pseudomonas syringae pv. phaseolicola (strain 1448A / Race 6)) protein is Protein-L-isoaspartate O-methyltransferase.